The chain runs to 249 residues: 2-C-methyl-D-erythritol 4-phosphate cytidylyltransferase (249 aa).

It belongs to the IspD/TarI cytidylyltransferase family. IspD subfamily.

It carries out the reaction 2-C-methyl-D-erythritol 4-phosphate + CTP + H(+) = 4-CDP-2-C-methyl-D-erythritol + diphosphate. Its pathway is isoprenoid biosynthesis; isopentenyl diphosphate biosynthesis via DXP pathway; isopentenyl diphosphate from 1-deoxy-D-xylulose 5-phosphate: step 2/6. Its function is as follows. Catalyzes the formation of 4-diphosphocytidyl-2-C-methyl-D-erythritol from CTP and 2-C-methyl-D-erythritol 4-phosphate (MEP). The chain is 2-C-methyl-D-erythritol 4-phosphate cytidylyltransferase from Chromohalobacter salexigens (strain ATCC BAA-138 / DSM 3043 / CIP 106854 / NCIMB 13768 / 1H11).